The primary structure comprises 192 residues: Elongation factor P (192 aa).

K37 bears the N6-(3,6-diaminohexanoyl)-5-hydroxylysine mark.

Belongs to the elongation factor P family. In terms of processing, may be beta-lysylated on the epsilon-amino group of Lys-37 by the combined action of EpmA and EpmB, and then hydroxylated on the C5 position of the same residue by EpmC (if this protein is present). Lysylation is critical for the stimulatory effect of EF-P on peptide-bond formation. The lysylation moiety may extend toward the peptidyltransferase center and stabilize the terminal 3-CCA end of the tRNA. Hydroxylation of the C5 position on Lys-37 may allow additional potential stabilizing hydrogen-bond interactions with the P-tRNA.

It is found in the cytoplasm. The protein operates within protein biosynthesis; polypeptide chain elongation. Involved in peptide bond synthesis. Alleviates ribosome stalling that occurs when 3 or more consecutive Pro residues or the sequence PPG is present in a protein, possibly by augmenting the peptidyl transferase activity of the ribosome. Modification of Lys-37 is required for alleviation. The sequence is that of Elongation factor P from Acinetobacter baylyi (strain ATCC 33305 / BD413 / ADP1).